The primary structure comprises 265 residues: GTP cyclohydrolase FolE2 (265 aa).

The protein belongs to the GTP cyclohydrolase IV family.

It carries out the reaction GTP + H2O = 7,8-dihydroneopterin 3'-triphosphate + formate + H(+). Its pathway is cofactor biosynthesis; 7,8-dihydroneopterin triphosphate biosynthesis; 7,8-dihydroneopterin triphosphate from GTP: step 1/1. Converts GTP to 7,8-dihydroneopterin triphosphate. The sequence is that of GTP cyclohydrolase FolE2 from Magnetococcus marinus (strain ATCC BAA-1437 / JCM 17883 / MC-1).